The chain runs to 37 residues: Photosystem II reaction center protein Y (37 aa).

The chain crosses the membrane as a helical span at residues 4-22 (AIVVFAPIIAAVAWVVFNI).

The protein belongs to the PsbY family. In terms of assembly, PSII is composed of 1 copy each of membrane proteins PsbA, PsbB, PsbC, PsbD, PsbE, PsbF, PsbH, PsbI, PsbJ, PsbK, PsbL, PsbM, PsbT, PsbX, PsbY, Psb30/Ycf12, peripheral proteins PsbO, CyanoQ (PsbQ), PsbU, PsbV and a large number of cofactors. It forms dimeric complexes.

The protein localises to the cellular thylakoid membrane. Functionally, loosely associated component of the core of photosystem II (PSII), it is not always seen in crystals. PSII is a light-driven water plastoquinone oxidoreductase, using light energy to abstract electrons from H(2)O, generating a proton gradient subsequently used for ATP formation. In Prochlorococcus marinus (strain MIT 9312), this protein is Photosystem II reaction center protein Y.